We begin with the raw amino-acid sequence, 185 residues long: Keratin-associated protein 4-8 (185 aa).

Repeat copies occupy residues 14–18 (GCGQD), 19–23 (LCQET), 24–28 (CCCPS), 39–43 (CYRPS), 44–48 (YSVSC), 49–53 (CCRPQ), 54–58 (CCQSV), 59–63 (CCQPT), 64–68 (CCRPS), 69–73 (CCVSS), 74–78 (CCKPQ), 79–83 (CCQSV), 84–88 (CCQPT), 89–93 (CCHPS), 94–98 (CCISS), 99–103 (CCRPS), 104–108 (CCVSS), 109–113 (CCKPQ), 114–118 (CCQSV), 119–123 (CCQPN), 124–128 (CCRPS), 134–138 (CCRPS), 139–143 (CCESS), 144–148 (CCRPC), and 149–164 (CCLR…HTTC). Positions 14–164 (GCGQDLCQET…CGRVSCHTTC (151 aa)) are 25 X 5 AA repeats of C-C-[IKRQVHEC]-[SPRT]-[STCVQPR].

It belongs to the KRTAP type 4 family. Interacts with hair keratins. Expressed in the hair follicles.

Functionally, in the hair cortex, hair keratin intermediate filaments are embedded in an interfilamentous matrix, consisting of hair keratin-associated proteins (KRTAP), which are essential for the formation of a rigid and resistant hair shaft through their extensive disulfide bond cross-linking with abundant cysteine residues of hair keratins. The matrix proteins include the high-sulfur and high-glycine-tyrosine keratins. In Homo sapiens (Human), this protein is Keratin-associated protein 4-8 (KRTAP4-8).